The chain runs to 109 residues: Parvalbumin alpha (109 aa).

EF-hand domains lie at 38 to 73 (KSKEIMQKVFHVLDQDQSGFIEKEELCLILKGFTPE) and 77 to 109 (LSDKETTALLAAGDKDGDGKIGVDEFVTLVSES). Positions 51, 53, 55, 57, 59, 62, 90, 92, 94, 96, and 101 each coordinate Ca(2+).

The protein belongs to the parvalbumin family.

In muscle, parvalbumin is thought to be involved in relaxation after contraction. It binds two calcium ions. In Pelophylax lessonae (Pool frog), this protein is Parvalbumin alpha.